The sequence spans 582 residues: Inositol transporter 4 (582 aa).

Transmembrane regions (helical) follow at residues 35–55 (GIGG…LLFI), 70–90 (STIV…GGWI), 105–125 (VLFL…VIIV), 128–148 (IFVG…ISEA), 162–182 (GLLI…FVHT), 188–208 (WMLG…LSLP), 290–310 (FVGI…AGYA), 317–337 (ALSL…MMFV), 345–365 (LMII…TVFS), 456–476 (FGFL…PGMG), 494–514 (LGGG…SESF), and 525–545 (GTFL…WLLV).

The protein belongs to the major facilitator superfamily. Sugar transporter (TC 2.A.1.1) family. In terms of tissue distribution, highly expressed in pollen and phloem companion cells.

The protein localises to the cell membrane. Its function is as follows. Plasma membrane inositol-proton symporter. Mediates high-affinity myoinositol-proton symport across the plasma membrane. Active with myoinositol, scylloinositol and D-chiroinositol. Low activity with mucoinositol and alloinositol. The polypeptide is Inositol transporter 4 (INT4) (Arabidopsis thaliana (Mouse-ear cress)).